We begin with the raw amino-acid sequence, 171 residues long: MAEQRNIFLIGPMGAGKSTIGRHLAQMLHLDFLDSDAEIEKKTGADIAWVFDVEGEEGFRNREQSMIDELTQKHGIVLATGGGALIRPENRIHLSARGIVVYLKTSVNKQLARTLKDKRRPLLQTDDPRTVLEALAEKRNEFYDEVADYTMETDEQSAKVVASQIIALLDF.

14-19 (GAGKST) contacts ATP. Position 18 (Ser-18) interacts with Mg(2+). Substrate is bound by residues Asp-36, Arg-60, and Gly-82. Position 120 (Arg-120) interacts with ATP. Residue Arg-139 participates in substrate binding. Residue Gln-156 coordinates ATP.

Belongs to the shikimate kinase family. As to quaternary structure, monomer. The cofactor is Mg(2+).

The protein resides in the cytoplasm. It carries out the reaction shikimate + ATP = 3-phosphoshikimate + ADP + H(+). It participates in metabolic intermediate biosynthesis; chorismate biosynthesis; chorismate from D-erythrose 4-phosphate and phosphoenolpyruvate: step 5/7. Its function is as follows. Catalyzes the specific phosphorylation of the 3-hydroxyl group of shikimic acid using ATP as a cosubstrate. This is Shikimate kinase from Psychromonas ingrahamii (strain DSM 17664 / CCUG 51855 / 37).